A 145-amino-acid polypeptide reads, in one-letter code: MAKKKIEAIIKLQVAAGKANPSPPIGPALGQHGVNIMGFCKEFNAKTQGMEPGMPIPVEISVYSDRSFTFEMKTPPASYLIKKAIKVKSGSSNPSKDFIGTITREQLEEIAKVKDPDLTAADIDAAVRIIAGSARSMGVKVEGVE.

It belongs to the universal ribosomal protein uL11 family. In terms of assembly, part of the ribosomal stalk of the 50S ribosomal subunit. Interacts with L10 and the large rRNA to form the base of the stalk. L10 forms an elongated spine to which L12 dimers bind in a sequential fashion forming a multimeric L10(L12)X complex. One or more lysine residues are methylated.

In terms of biological role, forms part of the ribosomal stalk which helps the ribosome interact with GTP-bound translation factors. The polypeptide is Large ribosomal subunit protein uL11 (Francisella philomiragia subsp. philomiragia (strain ATCC 25017 / CCUG 19701 / FSC 153 / O#319-036)).